The chain runs to 86 residues: Large ribosomal subunit protein bL31 (86 aa).

The segment at tyrosine 65 to lysine 86 is disordered. A compositionally biased stretch (basic and acidic residues) spans threonine 74–lysine 86.

The protein belongs to the bacterial ribosomal protein bL31 family. Type A subfamily. As to quaternary structure, part of the 50S ribosomal subunit.

In terms of biological role, binds the 23S rRNA. This is Large ribosomal subunit protein bL31 from Prochlorococcus marinus subsp. pastoris (strain CCMP1986 / NIES-2087 / MED4).